Here is a 475-residue protein sequence, read N- to C-terminus: Tubulin epsilon chain (475 aa).

Residue Gly-148–Gly-154 coordinates GTP.

This sequence belongs to the tubulin family. As to quaternary structure, found in a complex with TEDC1, TEDC2, TUBE1 and TUBD1.

It is found in the cytoplasm. The protein localises to the cytoskeleton. Its subcellular location is the microtubule organizing center. The protein resides in the centrosome. The sequence is that of Tubulin epsilon chain (Tube1) from Mus musculus (Mouse).